The chain runs to 178 residues: ATP-dependent protease subunit HslV (178 aa).

The active site involves threonine 2. Residues serine 159, cysteine 162, and threonine 165 each coordinate Na(+).

It belongs to the peptidase T1B family. HslV subfamily. In terms of assembly, a double ring-shaped homohexamer of HslV is capped on each side by a ring-shaped HslU homohexamer. The assembly of the HslU/HslV complex is dependent on binding of ATP.

It is found in the cytoplasm. The catalysed reaction is ATP-dependent cleavage of peptide bonds with broad specificity.. Allosterically activated by HslU binding. Functionally, protease subunit of a proteasome-like degradation complex believed to be a general protein degrading machinery. In Buchnera aphidicola subsp. Cinara cedri (strain Cc), this protein is ATP-dependent protease subunit HslV.